A 442-amino-acid chain; its full sequence is Putative FNIP repeat-containing protein L170 (442 aa).

FNIP repeat units follow at residues 213 to 252, 253 to 294, and 295 to 348; these read FNSS…IGRG, FNSE…LGCF, and FNQS…FGMY.

This chain is Putative FNIP repeat-containing protein L170, found in Acanthamoeba polyphaga mimivirus (APMV).